The chain runs to 152 residues: MALRMWASSTANALRLSSATRPHYSPLSRCFSSVLDGLKYANSHEWVKHEGSVATVGITDHAQDHLGEVVFVDLPEAGGSVTKATGFGAVESVKATSDVNSPISGEIVEVNSKLSETPGLINSSPYEDGWMIKVKPSNPSELDSLMGAKEYT.

A mitochondrion-targeting transit peptide spans 1–31; sequence MALRMWASSTANALRLSSATRPHYSPLSRCF. The Lipoyl-binding domain maps to 53–135; sequence VATVGITDHA…YEDGWMIKVK (83 aa). N6-lipoyllysine is present on Lys94.

Belongs to the GcvH family. As to quaternary structure, the glycine cleavage system is composed of four proteins: P, T, L and H. It depends on (R)-lipoate as a cofactor.

The protein localises to the mitochondrion. The glycine cleavage system catalyzes the degradation of glycine. The H protein shuttles the methylamine group of glycine from the P protein to the T protein. The protein is Glycine cleavage system H protein, mitochondrial (GDCSH) of Flaveria pubescens (Yellowtops).